We begin with the raw amino-acid sequence, 2116 residues long: Non-structural polyprotein p200 (2116 aa).

Residues 36 to 49 (EVRDVVTAAQKRAI) form a required for efficient proteolysis and P150-P90 interaction region. Positions 57-247 (VFTQMQVSDH…TRPCTTRIYQ (191 aa)) constitute an Alphavirus-like MT domain. Over residues 457–467 (GPLEDGGRHLD) the composition is skewed to basic and acidic residues. Disordered regions lie at residues 457-477 (GPLEDGGRHLDTVQPPKSPPR) and 712-805 (AGPR…ADPD). Pro residues-rich tracts occupy residues 721 to 730 (SPPPGDPPPP) and 745 to 776 (TPPPAPARDPPPPAPSPPAPPRAGDPVPPIPA). 3 short sequence motifs (pxxPxR; class II SH3-binding) span residues 727–732 (PPPPRR), 747–752 (PPAPAR), and 761–766 (PPAPPR). In terms of domain architecture, Macro spans 806-985 (SDIVESYARA…LTHASVLVGA (180 aa)). Residues 992 to 1031 (VSPPPTEPLASCPAGDPGRPAQRSASPPATPLGDATAPEP) form a disordered region. The Peptidase C27 domain maps to 1000–1301 (LASCPAGDPG…WLAVPLSRGG (302 aa)). C1152 (for cysteine protease activity) is an active-site residue. Residues 1152–1183 (CWLRAAANVAQAARACGAYTSAGCPKCAYGRA) are interaction with host CALM1. C1175, C1178, C1227, and H1273 together coordinate Zn(2+). The interval 1193–1228 (FAALSQRWSASHADASPDGTGDPLDPLMETVGCACS) is EF-hand-like. H1273 acts as the For cysteine protease activity in catalysis. One can recognise a (+)RNA virus helicase ATP-binding domain in the interval 1320–1468 (EVRRLGDDAM…VPDRWPTERS (149 aa)). Position 1352–1359 (1352–1359 (MAAGAGKT)) interacts with a ribonucleoside 5'-triphosphate. The (+)RNA virus helicase C-terminal domain maps to 1469-1609 (RHTWRFPDCW…ELKEVPAGID (141 aa)). The involved in P150-P90 interaction stretch occupies residues 1700 to 1900 (YRAGEDGSTL…VELEISAALL (201 aa)). A RdRp catalytic domain is found at 1870–1981 (TNAIEVDFTE…FLPEGARSAA (112 aa)). The Human RB1 binding signature appears at 1902-1906 (LPCAE).

As to quaternary structure, interacts with RNA-directed RNA polymerase p90. Interacts with host CALM1; this interaction is necessary for the protease activity and viral infectivity. Interacts with host C1QBP. Interacts with the capsid protein. Interacts with human RB1/retinoblastoma protein. Interacts with protease/methyltransferase p150. The cofactor is Zn(2+). Specific enzymatic cleavage by its own cysteine protease yield mature proteins p150 and p90.

Its subcellular location is the host membrane. It is found in the host cytoplasm. The protein resides in the host perinuclear region. The catalysed reaction is RNA(n) + a ribonucleoside 5'-triphosphate = RNA(n+1) + diphosphate. It catalyses the reaction a ribonucleoside 5'-triphosphate + H2O = a ribonucleoside 5'-diphosphate + phosphate + H(+). It carries out the reaction ATP + H2O = ADP + phosphate + H(+). Probable principal replicase for the negative-strand DNA, which replicates the 40S (+) genomic RNA into (-) antigenomic RNA. It cannot replicate the (-) into (+) until cleaved into p150 and p90 mature proteins. Functionally, protease that cleaves the precursor polyprotein into two mature products. Together with RNA-directed RNA polymerase p90, replicates the 40S genomic and antigenomic RNA by recognizing replications specific signals. The heterodimer P150/p90 is probably the principal replicase for positive-strand genomic RNA and the 24S subgenomic RNA, which codes for structural proteins. Responsible for the mRNA-capping of the viral mRNAs. This function is necessary since all viral RNAs are synthesized in the cytoplasm, and host capping enzymes are restricted to the nucleus. Forms fibers late in the infection that may be involved in cell-to-cell spread of the virus RNA in the absence of virus particle formation. Its function is as follows. Together with protease/methyltransferase p150, replicates the 40S genomic and antigenomic RNA by recognizing replications specific signals. The heterodimer P150/p90 is probably the principal replicase for positive-strand genomic RNA and the 24S subgenomic RNA, which codes for structural proteins. A helicase activity is probably also present. This chain is Non-structural polyprotein p200, found in Rubella virus (strain Therien) (RUBV).